We begin with the raw amino-acid sequence, 136 residues long: Cytokine-like protein 1 (136 aa).

A signal peptide spans 1–22 (MRTPGPLPVLLLLLAGAPAARP).

As to expression, specifically expressed in CD34+ hematopoietic cells.

It localises to the secreted. The sequence is that of Cytokine-like protein 1 (CYTL1) from Homo sapiens (Human).